Consider the following 496-residue polypeptide: Glycerol kinase (496 aa).

Residue T12 participates in ADP binding. ATP contacts are provided by T12, T13, and S14. T12 provides a ligand contact to sn-glycerol 3-phosphate. R16 is a binding site for ADP. The sn-glycerol 3-phosphate site is built by R82, E83, and Y134. Positions 82, 83, and 134 each coordinate glycerol. Residue H230 is modified to Phosphohistidine; by HPr. Sn-glycerol 3-phosphate is bound at residue D244. Residues D244 and Q245 each contribute to the glycerol site. The ADP site is built by T266 and G309. ATP-binding residues include T266, G309, Q313, and G410. G410 and N414 together coordinate ADP.

Belongs to the FGGY kinase family. Homotetramer and homodimer (in equilibrium). In terms of processing, the phosphoenolpyruvate-dependent sugar phosphotransferase system (PTS), including enzyme I, and histidine-containing protein (HPr) are required for the phosphorylation, which leads to the activation of the enzyme.

It carries out the reaction glycerol + ATP = sn-glycerol 3-phosphate + ADP + H(+). It participates in polyol metabolism; glycerol degradation via glycerol kinase pathway; sn-glycerol 3-phosphate from glycerol: step 1/1. Its activity is regulated as follows. Activated by phosphorylation and inhibited by fructose 1,6-bisphosphate (FBP). Its function is as follows. Key enzyme in the regulation of glycerol uptake and metabolism. Catalyzes the phosphorylation of glycerol to yield sn-glycerol 3-phosphate. This is Glycerol kinase from Bacillus cereus (strain G9842).